Consider the following 314-residue polypeptide: tRNA-cytidine(32) 2-sulfurtransferase (314 aa).

The PP-loop motif signature appears at 46–51; the sequence is SGGKDS. The [4Fe-4S] cluster site is built by cysteine 121, cysteine 124, and cysteine 212.

This sequence belongs to the TtcA family. In terms of assembly, homodimer. The cofactor is Mg(2+). [4Fe-4S] cluster serves as cofactor.

It is found in the cytoplasm. The enzyme catalyses cytidine(32) in tRNA + S-sulfanyl-L-cysteinyl-[cysteine desulfurase] + AH2 + ATP = 2-thiocytidine(32) in tRNA + L-cysteinyl-[cysteine desulfurase] + A + AMP + diphosphate + H(+). It functions in the pathway tRNA modification. Functionally, catalyzes the ATP-dependent 2-thiolation of cytidine in position 32 of tRNA, to form 2-thiocytidine (s(2)C32). The sulfur atoms are provided by the cysteine/cysteine desulfurase (IscS) system. The sequence is that of tRNA-cytidine(32) 2-sulfurtransferase from Nitrosomonas europaea (strain ATCC 19718 / CIP 103999 / KCTC 2705 / NBRC 14298).